The sequence spans 404 residues: Argininosuccinate synthase (404 aa).

Residues 10–18 (AYSGGLDTS) and alanine 37 contribute to the ATP site. Residues tyrosine 88 and serine 93 each coordinate L-citrulline. Glycine 118 contacts ATP. Residues threonine 120, asparagine 124, and aspartate 125 each coordinate L-aspartate. L-citrulline is bound at residue asparagine 124. L-citrulline contacts are provided by arginine 128, serine 178, serine 187, glutamate 263, and tyrosine 275.

Belongs to the argininosuccinate synthase family. Type 1 subfamily. Homotetramer.

It localises to the cytoplasm. The catalysed reaction is L-citrulline + L-aspartate + ATP = 2-(N(omega)-L-arginino)succinate + AMP + diphosphate + H(+). It functions in the pathway amino-acid biosynthesis; L-arginine biosynthesis; L-arginine from L-ornithine and carbamoyl phosphate: step 2/3. This Hahella chejuensis (strain KCTC 2396) protein is Argininosuccinate synthase.